The chain runs to 107 residues: U1-lycotoxin-Ls1b (107 aa).

Positions 1–20 (MMKALVVVALLVTLISYSSS) are cleaved as a signal peptide. The propeptide occupies 21-41 (EGIDDLEADELLSLMANEQTR). Cystine bridges form between Cys44-Cys59, Cys51-Cys68, Cys58-Cys86, and Cys70-Cys84.

Belongs to the neurotoxin 19 (CSTX) family. 04 (U1-Lctx) subfamily. Expressed by the venom gland.

The protein localises to the secreted. The polypeptide is U1-lycotoxin-Ls1b (Lycosa singoriensis (Wolf spider)).